The primary structure comprises 226 residues: Ribonuclease 3 (226 aa).

Residues 2–129 (IETISKTIKY…LIGAIYLDGG (128 aa)) enclose the RNase III domain. Mg(2+) is bound at residue glutamate 42. Residue aspartate 46 is part of the active site. Residues asparagine 115 and glutamate 118 each coordinate Mg(2+). Glutamate 118 is an active-site residue. A DRBM domain is found at 154 to 223 (DAKTILQEFI…ASLMLNQIKD (70 aa)).

It belongs to the ribonuclease III family. As to quaternary structure, homodimer. Mg(2+) is required as a cofactor.

The protein localises to the cytoplasm. It catalyses the reaction Endonucleolytic cleavage to 5'-phosphomonoester.. Its function is as follows. Digests double-stranded RNA. Involved in the processing of primary rRNA transcript to yield the immediate precursors to the large and small rRNAs (23S and 16S). Processes some mRNAs, and tRNAs when they are encoded in the rRNA operon. Processes pre-crRNA and tracrRNA of type II CRISPR loci if present in the organism. The polypeptide is Ribonuclease 3 (Ehrlichia canis (strain Jake)).